The sequence spans 595 residues: Putative lipase atg15 (595 aa).

The Cytoplasmic portion of the chain corresponds to M1–D20. Residues L21–G41 traverse the membrane as a helical; Signal-anchor for type II membrane protein segment. At S42 to F595 the chain is on the lumenal side. Residues N164, N199, N221, N279, and N303 are each glycosylated (N-linked (GlcNAc...) asparagine). S319 functions as the Charge relay system in the catalytic mechanism. N-linked (GlcNAc...) asparagine glycosylation is present at N465.

It belongs to the AB hydrolase superfamily. Lipase family. As to quaternary structure, binds to both phosphatidylinositol (PI) and phosphatidylinositol 3,5-bisphosphate (PIP2).

Its subcellular location is the endosome. The protein localises to the multivesicular body membrane. It is found in the prevacuolar compartment membrane. The enzyme catalyses a triacylglycerol + H2O = a diacylglycerol + a fatty acid + H(+). In terms of biological role, lipase which is essential for lysis of subvacuolar cytoplasm to vacuole targeted bodies and intravacuolar autophagic bodies. Involved in the lysis of intravacuolar multivesicular body (MVB) vesicles. The intravacuolar membrane disintegration by atg15 is critical to life span extension. The chain is Putative lipase atg15 (atg15) from Aspergillus niger (strain ATCC MYA-4892 / CBS 513.88 / FGSC A1513).